The sequence spans 298 residues: MGQKINPHGFRLGITTDWKSRWYADKQYSEYVAEDVKIRRRLSRGMERAGISKVEIERTRERVRVDIHTARPGIVIGRRGAEADRIRGSLEKLTGKQVQLNILEVKNAEADAQLVAQGVAEQLSNRVSFRRAMRKAIQSAMRSPQVKGIRVQCGGRLGGAEMSRSEFYREGRVPLHTLRADIDYGFFEARTTFGRIGVKVWIYKGELVGGLKQKQQESEVRPPRGERGERGGRPERGGRRRSGASGTTGSGGTEAGRAAADKSKGSAQSPEQAQTSGDVASANAPQVAEPRADEKTEG.

In terms of domain architecture, KH type-2 spans 38 to 106; it reads IRRRLSRGME…QVQLNILEVK (69 aa). Residues 212-298 form a disordered region; it reads KQKQQESEVR…EPRADEKTEG (87 aa). The span at 214–237 shows a compositional bias: basic and acidic residues; the sequence is KQQESEVRPPRGERGERGGRPERG. A compositionally biased stretch (polar residues) spans 265–278; the sequence is GSAQSPEQAQTSGD.

This sequence belongs to the universal ribosomal protein uS3 family. Part of the 30S ribosomal subunit. Forms a tight complex with proteins S10 and S14.

Functionally, binds the lower part of the 30S subunit head. Binds mRNA in the 70S ribosome, positioning it for translation. This is Small ribosomal subunit protein uS3 from Saccharopolyspora erythraea (strain ATCC 11635 / DSM 40517 / JCM 4748 / NBRC 13426 / NCIMB 8594 / NRRL 2338).